The sequence spans 222 residues: Riboflavin kinase (222 aa).

Residues 1–92 (MVEAEDLQSL…VRIFNPDQRG (92 aa)) form a unknown region. The interval 93 to 222 (YTLTGTVISG…DTIEVEITHD (130 aa)) is riboflavin kinase. 102-107 (GLGEGR) contacts CDP. Residues T131 and N133 each contribute to the Mg(2+) site. Positions 188 and 196 each coordinate FMN. 201–204 (CELR) contacts CDP.

This sequence belongs to the archaeal riboflavin kinase family. Mg(2+) serves as cofactor.

The catalysed reaction is riboflavin + CTP = CDP + FMN + H(+). Its pathway is cofactor biosynthesis; FMN biosynthesis; FMN from riboflavin (CTP route): step 1/1. Its function is as follows. Catalyzes the CTP-dependent phosphorylation of riboflavin (vitamin B2) to form flavin mononucleotide (FMN). This chain is Riboflavin kinase (ribK), found in Methanoculleus marisnigri (strain ATCC 35101 / DSM 1498 / JR1).